The following is a 528-amino-acid chain: Major facilitator-type transporter psiT2 (528 aa).

The interval 1–20 (MSPERSASLEPDEHSSLLSD) is disordered. The next 5 membrane-spanning stretches (helical) occupy residues 87-107 (FYSG…IFML), 125-145 (LGVA…MMLV), 148-168 (VCAG…SELT), 174-194 (ALVV…GPLI), and 220-240 (FLPS…GYFF). Low complexity predominate over residues 260-270 (STSSISSRTST). A disordered region spans residues 260 to 299 (STSSISSRTSTLYGATDDHNRDASESTALSPEEAEDEIDS). 6 helical membrane-spanning segments follow: residues 322–342 (FLMF…FTAV), 357–377 (AFSV…PWVL), 388–408 (FCMF…PLAQ), 424–444 (GLLY…VMAF), 460–479 (LATA…ALCP), and 493–513 (NILG…AGVW).

It belongs to the major facilitator superfamily. TCR/Tet family.

It is found in the membrane. Major facilitator-type transporter; part of the gene cluster that mediates the biosynthesis of psilocybin, a psychotropic tryptamine-derived natural product. The sequence is that of Major facilitator-type transporter psiT2 from Psilocybe cyanescens.